The chain runs to 622 residues: Mitochondrial distribution and morphology protein 34 (622 aa).

The SMP-LTD domain maps to 1 to 195; it reads MAFNFNWSPL…LPAIIHRLSL (195 aa). 6 disordered regions span residues 211–234, 303–322, 355–432, 445–464, 482–546, and 581–622; these read QVTN…DPVD, PSGL…SHVA, SMGA…IRQP, ERNA…PASR, SLQQ…QTHL, and KMGG…AYRH. The segment covering 214–225 has biased composition (low complexity); that stretch reads NPPLEGPGLDPL. Residues 360 to 372 show a composition bias toward basic residues; sequence RHSKAHARKRKKR. The segment covering 373-384 has biased composition (basic and acidic residues); that stretch reads VVDLRRRPKNTD. The span at 388 to 404 shows a compositional bias: low complexity; sequence SVSGESEFTESTSAASV. 2 stretches are compositionally biased toward polar residues: residues 482-495 and 522-532; these read SLQQ…SKSL and NASNYTSSGDS. Composition is skewed to low complexity over residues 533 to 543 and 592 to 601; these read QQQQQQQQQHQ and NNKNDNKNNN.

It belongs to the MDM34 family. As to quaternary structure, component of the ER-mitochondria encounter structure (ERMES) or MDM complex, composed of MMM1, MDM10, MDM12 and MDM34.

It localises to the mitochondrion outer membrane. In terms of biological role, component of the ERMES/MDM complex, which serves as a molecular tether to connect the endoplasmic reticulum (ER) and mitochondria. Components of this complex are involved in the control of mitochondrial shape and protein biogenesis, and function in nonvesicular lipid trafficking between the ER and mitochondria. MDM34 is required for the interaction of the ER-resident membrane protein MMM1 and the outer mitochondrial membrane-resident beta-barrel protein MDM10. This chain is Mitochondrial distribution and morphology protein 34, found in Ajellomyces capsulatus (strain G186AR / H82 / ATCC MYA-2454 / RMSCC 2432) (Darling's disease fungus).